The following is a 253-amino-acid chain: 3-deoxy-manno-octulosonate cytidylyltransferase (253 aa).

It belongs to the KdsB family.

Its subcellular location is the cytoplasm. It carries out the reaction 3-deoxy-alpha-D-manno-oct-2-ulosonate + CTP = CMP-3-deoxy-beta-D-manno-octulosonate + diphosphate. It functions in the pathway nucleotide-sugar biosynthesis; CMP-3-deoxy-D-manno-octulosonate biosynthesis; CMP-3-deoxy-D-manno-octulosonate from 3-deoxy-D-manno-octulosonate and CTP: step 1/1. Its pathway is bacterial outer membrane biogenesis; lipopolysaccharide biosynthesis. Its function is as follows. Activates KDO (a required 8-carbon sugar) for incorporation into bacterial lipopolysaccharide in Gram-negative bacteria. The chain is 3-deoxy-manno-octulosonate cytidylyltransferase from Idiomarina loihiensis (strain ATCC BAA-735 / DSM 15497 / L2-TR).